The sequence spans 345 residues: Acetylserotonin O-methyltransferase (345 aa).

Residues Tyr147, Trp164, Asp210, 235-237, and Arg252 each bind S-adenosyl-L-methionine; that span reads GDF. The active-site Proton donor/acceptor is His255. Substrate-binding residues include Asp256, Asn302, and Gln306.

Belongs to the class I-like SAM-binding methyltransferase superfamily. Cation-independent O-methyltransferase family. As to quaternary structure, homodimer. In terms of tissue distribution, expressed in the pineal gland (at protein level). Not detectable in retina, nor in liver.

It catalyses the reaction N-acetylserotonin + S-adenosyl-L-methionine = melatonin + S-adenosyl-L-homocysteine + H(+). The protein operates within aromatic compound metabolism; melatonin biosynthesis; melatonin from serotonin: step 1/2. In terms of biological role, catalyzes the transfer of a methyl group onto N-acetylserotonin, producing melatonin (N-acetyl-5-methoxytryptamine). This chain is Acetylserotonin O-methyltransferase (ASMT), found in Bos taurus (Bovine).